Here is a 126-residue protein sequence, read N- to C-terminus: Phosphoribosyl-AMP cyclohydrolase (126 aa).

A Mg(2+)-binding site is contributed by Asp77. Cys78 contributes to the Zn(2+) binding site. Mg(2+)-binding residues include Asp79 and Asp81. Zn(2+) is bound by residues Cys95 and Cys102.

It belongs to the PRA-CH family. In terms of assembly, homodimer. Requires Mg(2+) as cofactor. Zn(2+) is required as a cofactor.

Its subcellular location is the cytoplasm. It catalyses the reaction 1-(5-phospho-beta-D-ribosyl)-5'-AMP + H2O = 1-(5-phospho-beta-D-ribosyl)-5-[(5-phospho-beta-D-ribosylamino)methylideneamino]imidazole-4-carboxamide. It participates in amino-acid biosynthesis; L-histidine biosynthesis; L-histidine from 5-phospho-alpha-D-ribose 1-diphosphate: step 3/9. In terms of biological role, catalyzes the hydrolysis of the adenine ring of phosphoribosyl-AMP. The protein is Phosphoribosyl-AMP cyclohydrolase of Cellvibrio japonicus (strain Ueda107) (Pseudomonas fluorescens subsp. cellulosa).